A 205-amino-acid polypeptide reads, in one-letter code: Small ribosomal subunit protein uS4 (205 aa).

A disordered region spans residues 18-46 (NIWGRPKSPVNRREYGPGQHGQRRKGKLS). The S4 RNA-binding domain occupies 94–157 (RRLDTVVYRA…KQLTFVLEAN (64 aa)).

The protein belongs to the universal ribosomal protein uS4 family. Part of the 30S ribosomal subunit. Contacts protein S5. The interaction surface between S4 and S5 is involved in control of translational fidelity.

One of the primary rRNA binding proteins, it binds directly to 16S rRNA where it nucleates assembly of the body of the 30S subunit. Functionally, with S5 and S12 plays an important role in translational accuracy. The chain is Small ribosomal subunit protein uS4 from Rhodopseudomonas palustris (strain BisB18).